The primary structure comprises 217 residues: 3,4-dihydroxy-2-butanone 4-phosphate synthase (217 aa).

D-ribulose 5-phosphate contacts are provided by residues 37-38, D42, 150-154, and E174; these read RE and RGGHT. Position 38 (E38) interacts with Mg(2+). H153 contributes to the Mg(2+) binding site.

It belongs to the DHBP synthase family. As to quaternary structure, homodimer. Requires Mg(2+) as cofactor. It depends on Mn(2+) as a cofactor.

The catalysed reaction is D-ribulose 5-phosphate = (2S)-2-hydroxy-3-oxobutyl phosphate + formate + H(+). The protein operates within cofactor biosynthesis; riboflavin biosynthesis; 2-hydroxy-3-oxobutyl phosphate from D-ribulose 5-phosphate: step 1/1. Functionally, catalyzes the conversion of D-ribulose 5-phosphate to formate and 3,4-dihydroxy-2-butanone 4-phosphate. This is 3,4-dihydroxy-2-butanone 4-phosphate synthase from Escherichia fergusonii (strain ATCC 35469 / DSM 13698 / CCUG 18766 / IAM 14443 / JCM 21226 / LMG 7866 / NBRC 102419 / NCTC 12128 / CDC 0568-73).